We begin with the raw amino-acid sequence, 252 residues long: Trans-aconitate 2-methyltransferase (252 aa).

This sequence belongs to the methyltransferase superfamily. Tam family.

The protein resides in the cytoplasm. It carries out the reaction trans-aconitate + S-adenosyl-L-methionine = (E)-3-(methoxycarbonyl)pent-2-enedioate + S-adenosyl-L-homocysteine. Functionally, catalyzes the S-adenosylmethionine monomethyl esterification of trans-aconitate. The protein is Trans-aconitate 2-methyltransferase of Escherichia fergusonii (strain ATCC 35469 / DSM 13698 / CCUG 18766 / IAM 14443 / JCM 21226 / LMG 7866 / NBRC 102419 / NCTC 12128 / CDC 0568-73).